A 393-amino-acid polypeptide reads, in one-letter code: Phospholipid-transporting ATPase accessory subunit CRF1 (393 aa).

Residues 1–46 (MGLILRWKEKKQLSSKQNAQKSRKPANTSFRQQRLKAWQPILSPQS) are Cytoplasmic-facing. Residues 47-67 (VLPLLILMACVFAPIGIGLVV) traverse the membrane as a helical segment. Residues 68 to 334 (STISVQRLVV…NSIIGAGNEA (267 aa)) are Lumenal-facing. The interval 70 to 332 (ISVQRLVVNY…TTNSIIGAGN (263 aa)) is confers specificity for binding DNF3. N78, N123, N187, N202, N213, N240, and N291 each carry an N-linked (GlcNAc...) asparagine glycan. Intrachain disulfides connect C82-C126 and C179-C193. A helical transmembrane segment spans residues 335–355 (LGIVYLIVAGIATLFAILFLI). Over 356-393 (KVIFKPRPMHDHSYLNFENSDTPFDESSVVSIPLREIL) the chain is Cytoplasmic.

It belongs to the CDC50/LEM3 family. As to quaternary structure, component of a flippase complex consisting of DNF3 and YNR048W/CRF1. Interacts with DNF3; the interaction is direct and required for proper expression and endoplasmic reticulum (ER) export of either partner.

It localises to the golgi apparatus. It is found in the trans-Golgi network membrane. Accessory component of a P4-ATPase flippase complex which catalyzes the hydrolysis of ATP coupled to the transport of phosphatidylcholine and small amounts of phosphatidylethanolamine from the lumen to the cytosolic leaflet of the trans-Golgi network and ensures the maintenance of asymmetric distribution of phospholipids. May be involved in transport from early endosomes to the trans-Golgi network (TGN). The protein is Phospholipid-transporting ATPase accessory subunit CRF1 of Saccharomyces cerevisiae (strain ATCC 204508 / S288c) (Baker's yeast).